The following is a 663-amino-acid chain: Oligopeptide-binding protein SarA (663 aa).

Residues 1–22 form the signal peptide; it reads MKKGKILALAGVALLATGVLAA. A lipid anchor (N-palmitoyl cysteine) is attached at C23. C23 is lipidated: S-diacylglycerol cysteine. Residues 637–663 are disordered; it reads QKAQEKWNKERAESNKKAQEELEKHVK.

It belongs to the bacterial solute-binding protein 5 family.

It localises to the cell membrane. In terms of biological role, may be involved in the expression of cell surface properties important for colonization of the human oral cavity. It may also be involved in uptake processes. The polypeptide is Oligopeptide-binding protein SarA (sarA) (Streptococcus gordonii (strain Challis / ATCC 35105 / BCRC 15272 / CH1 / DL1 / V288)).